Here is a 115-residue protein sequence, read N- to C-terminus: MMLDPQIAARLKRNADGLVTAVVQERGSRDVLMVAWMDDAALARTLETREATYYSRSRGQQWVKGETSGHTQYVHSVRLDCDGDTVLLTVDQVGGACHTGDHSCFDADVLLHPQD.

Residue Asp-80 participates in Mg(2+) binding. Cys-81 provides a ligand contact to Zn(2+). Residues Asp-82 and Asp-84 each contribute to the Mg(2+) site. Residues Cys-97 and Cys-104 each contribute to the Zn(2+) site.

The protein belongs to the PRA-CH family. In terms of assembly, homodimer. Requires Mg(2+) as cofactor. Zn(2+) is required as a cofactor.

Its subcellular location is the cytoplasm. The enzyme catalyses 1-(5-phospho-beta-D-ribosyl)-5'-AMP + H2O = 1-(5-phospho-beta-D-ribosyl)-5-[(5-phospho-beta-D-ribosylamino)methylideneamino]imidazole-4-carboxamide. It participates in amino-acid biosynthesis; L-histidine biosynthesis; L-histidine from 5-phospho-alpha-D-ribose 1-diphosphate: step 3/9. In terms of biological role, catalyzes the hydrolysis of the adenine ring of phosphoribosyl-AMP. In Mycobacterium avium (strain 104), this protein is Phosphoribosyl-AMP cyclohydrolase.